The following is a 220-amino-acid chain: Putative O-methyltransferase Mmcs_3995 (220 aa).

S-adenosyl-L-methionine-binding positions include V47, E69, 71–72 (GT), S77, D95, and V96. Residue D143 coordinates substrate. D145 provides a ligand contact to S-adenosyl-L-methionine.

Belongs to the class I-like SAM-binding methyltransferase superfamily. Cation-dependent O-methyltransferase family.

The chain is Putative O-methyltransferase Mmcs_3995 from Mycobacterium sp. (strain MCS).